A 411-amino-acid chain; its full sequence is Phospholipase A1-II 6 (411 aa).

Serine 226 functions as the Acyl-ester intermediate in the catalytic mechanism. Catalysis depends on charge relay system residues serine 226, aspartate 296, and histidine 334.

Belongs to the AB hydrolase superfamily. Lipase family.

It localises to the cytoplasm. In terms of biological role, acylhydrolase that catalyzes the hydrolysis of phospholipids at the sn-1 position. In Oryza sativa subsp. japonica (Rice), this protein is Phospholipase A1-II 6.